Consider the following 142-residue polypeptide: Transcriptional regulator MraZ (142 aa).

2 SpoVT-AbrB domains span residues 5–51 (ASAL…PRPE) and 77–120 (AADV…DAAT).

This sequence belongs to the MraZ family. In terms of assembly, forms oligomers.

The protein localises to the cytoplasm. The protein resides in the nucleoid. This is Transcriptional regulator MraZ from Cupriavidus pinatubonensis (strain JMP 134 / LMG 1197) (Cupriavidus necator (strain JMP 134)).